The primary structure comprises 570 residues: Dual specificity testis-specific protein kinase 2 (570 aa).

Residues 58 to 313 enclose the Protein kinase domain; it reads DFTREKIGSG…EIGKTLKEIM (256 aa). Residues 64-72 and lysine 87 contribute to the ATP site; that span reads IGSGFFSEV. Catalysis depends on aspartate 176, which acts as the Proton acceptor. A Phosphoserine; by autocatalysis modification is found at serine 219. The segment covering 316–327 has biased composition (basic and acidic residues); it reads LPEEELERDRKL. The interval 316-357 is disordered; that stretch reads LPEEELERDRKLQPTAKGPLEKVPGGKRLSSLDDKIPHKSPR. Phosphoserine occurs at positions 369, 456, and 460. The disordered stretch occupies residues 511-530; that stretch reads AMDCSNPQEENGFGPRLKGT.

The protein belongs to the protein kinase superfamily. TKL Ser/Thr protein kinase family. Mg(2+) serves as cofactor. Requires Mn(2+) as cofactor.

Its subcellular location is the nucleus. The catalysed reaction is L-seryl-[protein] + ATP = O-phospho-L-seryl-[protein] + ADP + H(+). It carries out the reaction L-threonyl-[protein] + ATP = O-phospho-L-threonyl-[protein] + ADP + H(+). The enzyme catalyses L-tyrosyl-[protein] + ATP = O-phospho-L-tyrosyl-[protein] + ADP + H(+). Its activity is regulated as follows. Activated by autophosphorylation on Ser-219. Functionally, dual specificity protein kinase activity catalyzing autophosphorylation and phosphorylation of exogenous substrates on both serine/threonine and tyrosine residues. Phosphorylates cofilin at 'Ser-3'. May play an important role in spermatogenesis. This chain is Dual specificity testis-specific protein kinase 2 (Tesk2), found in Mus musculus (Mouse).